Consider the following 379-residue polypeptide: Cytochrome b (379 aa).

The next 4 membrane-spanning stretches (helical) occupy residues 33-53 (FGSL…FLAM), 77-98 (WLIR…YLHI), 113-133 (WNIG…GYVL), and 178-198 (FFAF…LHLL). His83 and His97 together coordinate heme b. Residues His182 and His196 each coordinate heme b. His201 lines the a ubiquinone pocket. The next 4 membrane-spanning stretches (helical) occupy residues 226–246 (YKDL…ALFY), 288–308 (LGGV…PILH), 320–340 (ISQL…WIGG), and 347–367 (YIII…VLNP).

This sequence belongs to the cytochrome b family. The cytochrome bc1 complex contains 3 respiratory subunits (MT-CYB, CYC1 and UQCRFS1), 2 core proteins (UQCRC1 and UQCRC2) and probably 6 low-molecular weight proteins. Heme b serves as cofactor.

It is found in the mitochondrion inner membrane. In terms of biological role, component of the ubiquinol-cytochrome c reductase complex (complex III or cytochrome b-c1 complex) that is part of the mitochondrial respiratory chain. The b-c1 complex mediates electron transfer from ubiquinol to cytochrome c. Contributes to the generation of a proton gradient across the mitochondrial membrane that is then used for ATP synthesis. In Anguilla mossambica (African longfin eel), this protein is Cytochrome b (mt-cyb).